We begin with the raw amino-acid sequence, 462 residues long: A-type ATP synthase subunit B (462 aa).

The protein belongs to the ATPase alpha/beta chains family. In terms of assembly, has multiple subunits with at least A(3), B(3), C, D, E, F, H, I and proteolipid K(x).

The protein resides in the cell membrane. Component of the A-type ATP synthase that produces ATP from ADP in the presence of a proton gradient across the membrane. The B chain is a regulatory subunit. The chain is A-type ATP synthase subunit B from Pyrococcus abyssi (strain GE5 / Orsay).